The sequence spans 509 residues: UDP-N-acetylmuramoyl-L-alanyl-D-glutamate--2,6-diaminopimelate ligase (509 aa).

Ser30 provides a ligand contact to UDP-N-acetyl-alpha-D-muramoyl-L-alanyl-D-glutamate. Gly110 to Thr116 contacts ATP. UDP-N-acetyl-alpha-D-muramoyl-L-alanyl-D-glutamate-binding positions include Thr152–Thr153, Ser179, Gln185, and Arg187. Residue Lys219 is modified to N6-carboxylysine. Meso-2,6-diaminopimelate is bound by residues Arg385, Asp409–Arg412, Gly476, and Glu480. Positions Asp409–Arg412 match the Meso-diaminopimelate recognition motif motif.

This sequence belongs to the MurCDEF family. MurE subfamily. The cofactor is Mg(2+). Carboxylation is probably crucial for Mg(2+) binding and, consequently, for the gamma-phosphate positioning of ATP.

It localises to the cytoplasm. It carries out the reaction UDP-N-acetyl-alpha-D-muramoyl-L-alanyl-D-glutamate + meso-2,6-diaminopimelate + ATP = UDP-N-acetyl-alpha-D-muramoyl-L-alanyl-gamma-D-glutamyl-meso-2,6-diaminopimelate + ADP + phosphate + H(+). The protein operates within cell wall biogenesis; peptidoglycan biosynthesis. Its function is as follows. Catalyzes the addition of meso-diaminopimelic acid to the nucleotide precursor UDP-N-acetylmuramoyl-L-alanyl-D-glutamate (UMAG) in the biosynthesis of bacterial cell-wall peptidoglycan. The protein is UDP-N-acetylmuramoyl-L-alanyl-D-glutamate--2,6-diaminopimelate ligase of Geobacter sulfurreducens (strain ATCC 51573 / DSM 12127 / PCA).